The primary structure comprises 525 residues: Serine/threonine protein phosphatase 2A 55 kDa regulatory subunit B beta isoform (525 aa).

A disordered region spans residues 1 to 31 (MDPFSKSPDDDDLRPEAEAARRPQPQPQPRE). 2 WD repeats span residues 48-87 (QEVD…DSAS) and 124-165 (EIEE…VKRI). Positions 169–191 (NLNTSQSSGNGTTSSSSSSSSRA) are disordered. Residues 171–189 (NTSQSSGNGTTSSSSSSSS) are compositionally biased toward low complexity. 4 WD repeats span residues 244-282 (AHDY…QSFN), 293-333 (DLTE…LCDN), 352-390 (EIIA…GPVA), and 495-525 (DLST…MYYA).

This sequence belongs to the phosphatase 2A regulatory subunit B family. As to quaternary structure, PP2A consists of a common heteromeric enzyme, composed of a catalytic subunit (subunits C), a constant regulatory subunit (subunit A), and a variety of regulatory subunits such as subunits B (the R2/B/PR55/B55, R3/B''/PR72/PR130/PR59 and R5/B'/B56 families).

Functionally, the B regulatory subunit may modulate substrate selectivity and catalytic activity, and may also direct the localization of the catalytic enzyme to a particular subcellular compartment. This is Serine/threonine protein phosphatase 2A 55 kDa regulatory subunit B beta isoform from Oryza sativa subsp. indica (Rice).